The following is a 259-amino-acid chain: Leucine-rich repeat-containing protein 3B (259 aa).

Positions 1-33 are cleaved as a signal peptide; sequence MNLVDLWLTRSLSMCLLLQSFVLMILCFHSASM. The region spanning 34 to 64 is the LRRNT domain; the sequence is CPKGCLCSSSGGLNVTCSNANLKEIPRDLPP. Asn47 carries an N-linked (GlcNAc...) asparagine glycan. 3 LRR repeats span residues 65–86, 89–110, and 114–135; these read ETVL…IFKD, QLRV…AFKG, and TLQT…AFNN. The N-linked (GlcNAc...) asparagine glycan is linked to Asn94. One can recognise an LRRCT domain in the interval 145-197; that stretch reads NPWHCDCTLQQVLRSMASNHETAHNVICKTSVLDEHAGRPFLNAANDADLCNL. The chain crosses the membrane as a helical span at residues 205–225; that stretch reads AMLVTMFGWFTMVISYVVYYV.

The protein belongs to the LRRC3 family.

The protein resides in the membrane. This Homo sapiens (Human) protein is Leucine-rich repeat-containing protein 3B (LRRC3B).